Here is a 911-residue protein sequence, read N- to C-terminus: DNA ligase 4 (911 aa).

Positions 271, 272, 273, 274, 278, 331, 345, 367, 427, 432, 449, and 451 each coordinate ATP. The active-site N6-AMP-lysine intermediate is the K273. E331 lines the Mg(2+) pocket. Mg(2+) is bound at residue E427. A required for catalytic activity region spans residues 610 to 620 (LASKHFYVGGD). BRCT domains are found at residues 654–743 (KISN…PHFM) and 808–911 (SPLS…QYLI).

This sequence belongs to the ATP-dependent DNA ligase family. As to quaternary structure, interacts with XRCC4; the LIG4-XRCC4 subcomplex has a 1:2 stoichiometry and XRCC4 is required for LIG4 stability. Component of the core long-range non-homologous end joining (NHEJ) complex (also named DNA-PK complex) composed of PRKDC, LIG4, XRCC4, XRCC6/Ku70, XRCC5/Ku86 and NHEJ1/XLF. Additional component of the NHEJ complex includes PAXX. Following autophosphorylation, PRKDC dissociates from DNA, leading to formation of the short-range NHEJ complex, composed of LIG4, XRCC4, XRCC6/Ku70, XRCC5/Ku86 and NHEJ1/XLF. Interacts with DCLRE1C; the interaction is direct. Interacts with APLF. Mg(2+) serves as cofactor.

It localises to the nucleus. It catalyses the reaction ATP + (deoxyribonucleotide)n-3'-hydroxyl + 5'-phospho-(deoxyribonucleotide)m = (deoxyribonucleotide)n+m + AMP + diphosphate.. DNA ligase involved in DNA non-homologous end joining (NHEJ); required for double-strand break (DSB) repair and V(D)J recombination. Catalyzes the NHEJ ligation step of the broken DNA during DSB repair by resealing the DNA breaks after the gap filling is completed. Joins single-strand breaks in a double-stranded polydeoxynucleotide in an ATP-dependent reaction. LIG4 is mechanistically flexible: it can ligate nicks as well as compatible DNA overhangs alone, while in the presence of XRCC4, it can ligate ends with 2-nucleotides (nt) microhomology and 1-nt gaps. Forms a subcomplex with XRCC4; the LIG4-XRCC4 subcomplex is responsible for the NHEJ ligation step and XRCC4 enhances the joining activity of LIG4. Binding of the LIG4-XRCC4 complex to DNA ends is dependent on the assembly of the DNA-dependent protein kinase complex DNA-PK to these DNA ends. LIG4 regulates nuclear localization of XRCC4. The sequence is that of DNA ligase 4 from Pongo abelii (Sumatran orangutan).